A 253-amino-acid polypeptide reads, in one-letter code: Dof zinc finger protein DOF3.4 (253 aa).

Residues 30–84 (LPCPRCDSSNTKFCYYNNYNFSQPRHFCKACRRYWTHGGTLRDVPVGGGTRKSAK) form a Dof-type zinc finger. 4 residues coordinate Zn(2+): Cys32, Cys35, Cys57, and Cys60. The tract at residues 73-103 (VPVGGGTRKSAKRSRTCSNSSSSSVSGVVSN) is disordered. Residues 90-103 (SNSSSSSVSGVVSN) show a composition bias toward low complexity.

In terms of assembly, interacts with OBF4 or OBF5. Constitutively expressed in the whole plant.

It localises to the nucleus. Its function is as follows. Transcription factor that binds specifically to a 5'-AA[AG]G-3' consensus core sequence. Enhances the DNA binding of OBF transcription factors to OCS elements. This Arabidopsis thaliana (Mouse-ear cress) protein is Dof zinc finger protein DOF3.4 (DOF3.4).